We begin with the raw amino-acid sequence, 523 residues long: F-box only protein 31-B (523 aa).

Positions 59–105 (PRSLLQLPPEILVEIFSSLPGTELPSLAQVCRKFRQILTTDTIWKRR) constitute an F-box domain. C201, H209, C225, and H231 together coordinate Zn(2+). The interval 372 to 427 (IQREQRQTGNEEDDGKGAGPDRAEHSQQPAPVHRPAKEDVNGVDNADDREQKPPNV) is disordered. Composition is skewed to basic and acidic residues over residues 386–396 (GKGAGPDRAEH) and 406–423 (PAKE…REQK).

It belongs to the FBXO31 family. Part of a SCF (SKP1-cullin-F-box) protein ligase complex SCF(FBXO31).

It is found in the cytoplasm. It functions in the pathway protein modification; protein ubiquitination. Substrate-recognition component of the SCF(FBXO31) protein ligase complex, which specifically mediates the ubiquitination of proteins amidated at their C-terminus in response to oxidative stress, leading to their degradation by the proteasome. Fbxo31 specifically recognizes and binds C-terminal peptides bearing an amide: C-terminal amidation in response to oxidative stress takes place following protein fragmentation. The SCF(FBXO31) also plays a role in G1 arrest following DNA damage by mediating ubiquitination of phosphorylated cyclin-D1 (ccnd1), promoting its degradation by the proteasome, resulting in G1 arrest. The SCF(FBXO31) complex is however not a major regulator of ccnd1 stability during the G1/S transition. The chain is F-box only protein 31-B (fbxo31-b) from Xenopus laevis (African clawed frog).